The primary structure comprises 388 residues: Aldolase vrtJ (388 aa).

The residue at position 241 (lysine 241) is an N6-(pyridoxal phosphate)lysine.

This sequence belongs to the threonine aldolase family. The cofactor is pyridoxal 5'-phosphate.

Its pathway is secondary metabolite biosynthesis; terpenoid biosynthesis. In terms of biological role, aldolase; part of the gene cluster that mediates the biosynthesis of viridicatumtoxin, a tetracycline-like fungal meroterpenoid with a unique, fused spirobicyclic ring system. The first step of the pathway is the production of the malonamoyl-CoA starter unit for the polyketide synthase vrtA. The aldolase vrtJ may be involved in the synthesis of the malonamate substrate for malonamoyl-CoA synthetase vrtB. The polyketide synthase vrtA then may utilize the malonamoyl-CoA starter unit, followed by sequential condensation of eight malonyl-CoA units to form the polyketide backbone. The cyclization of the last ring could be mediated by the lactamase-like protein vrtG. The proposed post-PKS tailoring steps are a hydroxylation at C5 catalyzed the cytochrome P450 monooxygenase vrtE, a hydroxylation at C12a catalyzed by VrtH and/or VrtI, and an O-methylation by the O-methyltransferase vrtF. VrtC is then proposed to catalyze the transfer of a geranyl group synthesized by vrtD to the aromatic C ring of the tetracyclic polyketide intermediate of viridicatumtoxin to yield previridicatumtoxin. Finally, the cytochrome P450 monooxygenase vrtK catalyzes the spirocyclization of the geranyl moiety of previridicatumtoxin to afford viridicatumtoxin. This chain is Aldolase vrtJ, found in Penicillium aethiopicum.